The following is a 122-amino-acid chain: Serum amyloid A-3 protein (122 aa).

The signal sequence occupies residues M1 to S18. Residues G88–Y122 are disordered. The span at E99–D109 shows a compositional bias: polar residues.

Belongs to the SAA family. As to expression, expressed by the liver; secreted in plasma. Expressed in synovial fibroblasts.

The protein localises to the secreted. Its function is as follows. Major acute phase reactant. Apolipoprotein of the HDL complex. In vitro exhibits antimicrobial activity against Escherichia coli, Streptococcus uberis and Pseudomonas aeruginosa. This Oryctolagus cuniculus (Rabbit) protein is Serum amyloid A-3 protein (SAA3).